We begin with the raw amino-acid sequence, 334 residues long: Trans-1,2-dihydrobenzene-1,2-diol dehydrogenase (334 aa).

Belongs to the Gfo/Idh/MocA family. As to quaternary structure, homodimer.

It carries out the reaction (1R,2R)-1,2-dihydrobenzene-1,2-diol + NADP(+) = catechol + NADPH + H(+). The enzyme catalyses D-xylose + NADP(+) = D-xylono-1,5-lactone + NADPH + H(+). This is Trans-1,2-dihydrobenzene-1,2-diol dehydrogenase (dhdh) from Danio rerio (Zebrafish).